The chain runs to 282 residues: Keratin-associated protein 10-1 (282 aa).

24 consecutive repeat copies span residues 26 to 30 (CCEPH), 31 to 35 (CCALS), 36 to 40 (CCAPA), 57 to 61 (CCQAA), 79 to 83 (CCQQS), 89 to 93 (CCTSS), 99 to 103 (CCVPV), 104 to 108 (CCKPV), 109 to 113 (CCLPT), 121 to 125 (CCQQS), 131 to 135 (CCASS), 141 to 145 (CCVPV), 146 to 150 (CCKPV), 163 to 167 (CCQQS), 173 to 177 (CCTSS), 183 to 187 (CCVPV), 193 to 197 (CCKPI), 198 to 202 (CCVPV), 210 to 214 (CCQQS), 220 to 224 (CCTTS), 225 to 229 (CCRPS), 244 to 248 (CCMPV), 251 to 255 (CCAPA), and 262 to 266 (CCRPA). Residues 26–266 (CCEPHCCALS…SCQASCCRPA (241 aa)) form a 24 X 5 AA repeats of C-C-X(3) region.

This sequence belongs to the KRTAP type 10 family. In terms of assembly, interacts with hair keratins. In terms of tissue distribution, restricted to a narrow region of the hair fiber cuticle, lying approximately 20 cell layers above the apex of the dermal papilla of the hair root; not detected in any other tissues.

Functionally, in the hair cortex, hair keratin intermediate filaments are embedded in an interfilamentous matrix, consisting of hair keratin-associated proteins (KRTAP), which are essential for the formation of a rigid and resistant hair shaft through their extensive disulfide bond cross-linking with abundant cysteine residues of hair keratins. The matrix proteins include the high-sulfur and high-glycine-tyrosine keratins. This chain is Keratin-associated protein 10-1 (KRTAP10-1), found in Homo sapiens (Human).